Here is a 349-residue protein sequence, read N- to C-terminus: Anthranilate phosphoribosyltransferase (349 aa).

5-phospho-alpha-D-ribose 1-diphosphate-binding positions include Gly-94, 97–98 (GD), Thr-102, 104–107 (NIST), 122–130 (KHGNRSVSS), and Ser-134. An anthranilate-binding site is contributed by Gly-94. Ser-106 is a Mg(2+) binding site. Asn-125 contributes to the anthranilate binding site. Residue Arg-180 coordinates anthranilate. Mg(2+) contacts are provided by Asp-239 and Glu-240.

This sequence belongs to the anthranilate phosphoribosyltransferase family. As to quaternary structure, homodimer. It depends on Mg(2+) as a cofactor.

It catalyses the reaction N-(5-phospho-beta-D-ribosyl)anthranilate + diphosphate = 5-phospho-alpha-D-ribose 1-diphosphate + anthranilate. Its pathway is amino-acid biosynthesis; L-tryptophan biosynthesis; L-tryptophan from chorismate: step 2/5. Functionally, catalyzes the transfer of the phosphoribosyl group of 5-phosphorylribose-1-pyrophosphate (PRPP) to anthranilate to yield N-(5'-phosphoribosyl)-anthranilate (PRA). This is Anthranilate phosphoribosyltransferase from Trichlorobacter lovleyi (strain ATCC BAA-1151 / DSM 17278 / SZ) (Geobacter lovleyi).